A 469-amino-acid polypeptide reads, in one-letter code: COP9 signalosome complex subunit 5 (469 aa).

Positions 63 to 200 constitute an MPN domain; that stretch reads TYISSLALCK…IGAFRTFPDN (138 aa). Zn(2+) is bound by residues H146, H148, and D159. The JAMM motif signature appears at 146 to 159; that stretch reads HSHPGYGCWLSGID. Disordered regions lie at residues 201–220 and 331–404; these read YKSP…PPSK and YDSF…KRPM. A compositionally biased stretch (acidic residues) spans 344-353; it reads DEMDDESDLD.

Belongs to the peptidase M67A family. CSN5 subfamily. In terms of assembly, component of the COP9 signalosome (CSN) complex.

The protein resides in the cytoplasm. It is found in the nucleus. In terms of biological role, catalytic Component of the COP9 signalosome (CSN) complex that acts as an regulator of the ubiquitin (Ubl) conjugation pathway by mediating the deneddylation of the cullin subunit of SCF-type E3 ubiquitin-protein ligase complexes. The CSN complex is involved in the regulation of the mating pheromone response. The chain is COP9 signalosome complex subunit 5 (RRI1) from Debaryomyces hansenii (strain ATCC 36239 / CBS 767 / BCRC 21394 / JCM 1990 / NBRC 0083 / IGC 2968) (Yeast).